A 125-amino-acid polypeptide reads, in one-letter code: MSKLKVKLLRGLAGESERHIQAVKSLGLKKRGQERILEDNPLVWGNIRKAFHLVGVAYRIDFSGDIPTVERDLSEKPDYTVINKNGVYTNGKGVYYFSRITDLEDFLRKKGYKKYKNWKGEEVEL.

Positions 1 to 61 (MSKLKVKLLR…HLVGVAYRID (61 aa)) are large ribosomal subunit protein uL30. Residues 62 to 125 (FSGDIPTVER…KNWKGEEVEL (64 aa)) are unknown.

It belongs to the universal ribosomal protein uL30 family. As to quaternary structure, part of the 50S ribosomal subunit.

In Aquifex aeolicus (strain VF5), this protein is Large ribosomal subunit protein uL30.